A 498-amino-acid polypeptide reads, in one-letter code: Myotilin (498 aa).

Disordered regions lie at residues 1–46 (MFNY…QPRQ), 64–151 (MSSS…HEIQ), and 202–241 (QDDS…NDQD). Omega-N-methylarginine is present on R20. The segment covering 29–43 (SSFSSQTKQSSIIIQ) has biased composition (low complexity). Positions 77-138 (AGSNPGQRVT…INAKPSQTAN (62 aa)) are enriched in polar residues. Residues 79–150 (SNPGQRVTTT…PIPRTPDHEI (72 aa)) are necessary for interaction with ACTN1. The segment covering 202-212 (QDDSGAQDSQQ) has biased composition (low complexity). A necessary for interaction with FLNC region spans residues 215 to 493 (SEHARLQVPT…QRLAAQSGLY (279 aa)). The necessary for interaction with ACTA1 stretch occupies residues 215-498 (SEHARLQVPT…QSGLYESEEL (284 aa)). A compositionally biased stretch (polar residues) spans 222–235 (VPTSQVRSRSTSRG). Ig-like C2-type domains lie at 250–335 (PRFI…ATFT) and 349–441 (PMFI…LDVT).

This sequence belongs to the myotilin/palladin family. Homodimer. Interacts with ACTA1, ACTN1, FLNA, FLNB, FLNC and MYOZ2. Interacts with the C-terminal region of MYOZ1. Expressed in skeletal muscle (at protein level). Expressed in skeletal muscle, heart, bone marrow and thyroid gland.

The protein localises to the cell membrane. The protein resides in the sarcolemma. Its subcellular location is the cytoplasm. It is found in the cytoskeleton. It localises to the myofibril. The protein localises to the sarcomere. The protein resides in the z line. Component of a complex of multiple actin cross-linking proteins. Involved in the control of myofibril assembly and stability at the Z lines in muscle cells. In Homo sapiens (Human), this protein is Myotilin (MYOT).